The sequence spans 286 residues: Formamidopyrimidine-DNA glycosylase (286 aa).

The active-site Schiff-base intermediate with DNA is the Pro-2. Glu-3 serves as the catalytic Proton donor. Lys-61 acts as the Proton donor; for beta-elimination activity in catalysis. DNA contacts are provided by His-96, Arg-115, and Lys-161. Residues 247 to 281 form an FPG-type zinc finger; the sequence is EAYGREGEPCRRCGRAMRREAFMNRSSYFCPSCQR. Arg-271 (proton donor; for delta-elimination activity) is an active-site residue.

This sequence belongs to the FPG family. In terms of assembly, monomer. It depends on Zn(2+) as a cofactor.

The catalysed reaction is Hydrolysis of DNA containing ring-opened 7-methylguanine residues, releasing 2,6-diamino-4-hydroxy-5-(N-methyl)formamidopyrimidine.. It catalyses the reaction 2'-deoxyribonucleotide-(2'-deoxyribose 5'-phosphate)-2'-deoxyribonucleotide-DNA = a 3'-end 2'-deoxyribonucleotide-(2,3-dehydro-2,3-deoxyribose 5'-phosphate)-DNA + a 5'-end 5'-phospho-2'-deoxyribonucleoside-DNA + H(+). Functionally, involved in base excision repair of DNA damaged by oxidation or by mutagenic agents. Acts as a DNA glycosylase that recognizes and removes damaged bases. Has a preference for oxidized purines, such as 7,8-dihydro-8-oxoguanine (8-oxoG). Has AP (apurinic/apyrimidinic) lyase activity and introduces nicks in the DNA strand. Cleaves the DNA backbone by beta-delta elimination to generate a single-strand break at the site of the removed base with both 3'- and 5'-phosphates. The polypeptide is Formamidopyrimidine-DNA glycosylase (Mycobacteroides abscessus (strain ATCC 19977 / DSM 44196 / CCUG 20993 / CIP 104536 / JCM 13569 / NCTC 13031 / TMC 1543 / L948) (Mycobacterium abscessus)).